The primary structure comprises 601 residues: ATP-dependent lipid A-core flippase (601 aa).

Transmembrane regions (helical) follow at residues 35 to 55 (FAVA…LAFL), 77 to 97 (LAII…AILM), 150 to 170 (AVTS…VIFY), 173 to 193 (WQLA…IAKF), 263 to 283 (MEFL…YQVI), and 286 to 306 (SSTP…YEPV). An ABC transmembrane type-1 domain is found at 36-318 (AVAMVCMLIA…LTNVNNTIQQ (283 aa)). The ABC transporter domain maps to 352–585 (IEIRNISFAY…RGEYYKLHQL (234 aa)). 384–391 (GMSGGGKT) contacts ATP.

This sequence belongs to the ABC transporter superfamily. Lipid exporter (TC 3.A.1.106) family. Homodimer.

The protein localises to the cell inner membrane. The catalysed reaction is ATP + H2O + lipid A-core oligosaccharideSide 1 = ADP + phosphate + lipid A-core oligosaccharideSide 2.. In terms of biological role, involved in lipopolysaccharide (LPS) biosynthesis. Translocates lipid A-core from the inner to the outer leaflet of the inner membrane. Transmembrane domains (TMD) form a pore in the inner membrane and the ATP-binding domain (NBD) is responsible for energy generation. The protein is ATP-dependent lipid A-core flippase of Syntrophus aciditrophicus (strain SB).